Consider the following 325-residue polypeptide: Elongation factor P--(R)-beta-lysine ligase (325 aa).

76 to 78 (SPE) lines the substrate pocket. Residues 100-102 (RNE) and asparagine 109 contribute to the ATP site. Tyrosine 118 contributes to the substrate binding site. 244 to 245 (EL) provides a ligand contact to ATP. Position 251 (glutamate 251) interacts with substrate. Glycine 300 contacts ATP.

Belongs to the class-II aminoacyl-tRNA synthetase family. EpmA subfamily. As to quaternary structure, homodimer.

It catalyses the reaction D-beta-lysine + L-lysyl-[protein] + ATP = N(6)-((3R)-3,6-diaminohexanoyl)-L-lysyl-[protein] + AMP + diphosphate + H(+). In terms of biological role, with EpmB is involved in the beta-lysylation step of the post-translational modification of translation elongation factor P (EF-P). Catalyzes the ATP-dependent activation of (R)-beta-lysine produced by EpmB, forming a lysyl-adenylate, from which the beta-lysyl moiety is then transferred to the epsilon-amino group of a conserved specific lysine residue in EF-P. The protein is Elongation factor P--(R)-beta-lysine ligase of Yersinia pseudotuberculosis serotype O:1b (strain IP 31758).